Reading from the N-terminus, the 721-residue chain is Peptide-N(4)-(N-acetyl-beta-glucosaminyl)asparagine amidase (721 aa).

Residues C193, C196, C225, and C228 each coordinate Zn(2+). C251 acts as the Nucleophile in catalysis. Residues H278 and D295 contribute to the active site.

It belongs to the transglutaminase-like superfamily. PNGase family. It depends on Zn(2+) as a cofactor.

It is found in the cytoplasm. The enzyme catalyses Hydrolysis of an N(4)-(acetyl-beta-D-glucosaminyl)asparagine residue in which the glucosamine residue may be further glycosylated, to yield a (substituted) N-acetyl-beta-D-glucosaminylamine and a peptide containing an aspartate residue.. Its function is as follows. Specifically deglycosylates the denatured form of N-linked glycoproteins in the cytoplasm and assists their proteasome-mediated degradation. Cleaves the beta-aspartyl-glucosamine (GlcNAc) of the glycan and the amide side chain of Asn, converting Asn to Asp. Prefers proteins containing high-mannose over those bearing complex type oligosaccharides. Can recognize misfolded proteins in the endoplasmic reticulum that are exported to the cytosol to be destroyed and deglycosylate them, while it has no activity toward native proteins. Deglycosylation is a prerequisite for subsequent proteasome-mediated degradation of some, but not all, misfolded glycoproteins. In Arabidopsis thaliana (Mouse-ear cress), this protein is Peptide-N(4)-(N-acetyl-beta-glucosaminyl)asparagine amidase (PNG1).